The primary structure comprises 157 residues: Small ribosomal subunit protein uS7 (157 aa).

The protein belongs to the universal ribosomal protein uS7 family. Part of the 30S ribosomal subunit. Contacts proteins S9 and S11.

In terms of biological role, one of the primary rRNA binding proteins, it binds directly to 16S rRNA where it nucleates assembly of the head domain of the 30S subunit. Is located at the subunit interface close to the decoding center, probably blocks exit of the E-site tRNA. The protein is Small ribosomal subunit protein uS7 of Akkermansia muciniphila (strain ATCC BAA-835 / DSM 22959 / JCM 33894 / BCRC 81048 / CCUG 64013 / CIP 107961 / Muc).